Consider the following 396-residue polypeptide: MGKTLSEIAQQLSTPQKVKKTVHKEVEATRAVPKVQLIYAFNGTGKTRLSRDFKQLLESKVHDGEGEDEAEQSALSRKKILYYNAFTEDLFYWDNDLQEDAEPKLKVQPNSYTNWLLTLLKDLGQDSNIVRYFQRYANDKLTPHFNPDFTEITFSMERGNDERSAHIKLSKGEESNFIWSVFYTLLDQVVTILNVADPDARETHAFDQLKYVFIDDPVSSLDDNHLIELAVNLAGLIKSSESDLKFIITTHSPIFYNVLFNELNGKVCYMLESFEDGTFALTEKYGDSNKSFSYHLHLKQTIEQAIADNNVERYHFTLLRNLYEKTASFLGYPKWSELLPDDKQLYLSRIINFTSHSTLSNEAVAEPTPAEKATVKLLLDHLKNNCGFWQQEQKNG.

Its function is as follows. Anticodon endonuclease (ACNase) that triggers the cleavage ligation of tRNA(Lys). It is activated by T4 stp protein and masked by the prrD protein (the endonuclease subunit of EcoprrI). The prr locus restricts phage T4 mutants lacking polynucleotide kinase or RNA ligase; T4 mutants lacking these genes manifest a T4-induced anticodon nuclease (ACNase). It is thought that Stp and other T4-encoded ACNase factors counteract the masking agents, thus activating the latent ACNase. The sequence is that of Anticodon nuclease from Escherichia coli.